The chain runs to 362 residues: H-2 class I histocompatibility antigen, D-K alpha chain (362 aa).

The N-terminal stretch at 1–24 (MGAMVPRTLLLLLAAALAPAQTRA) is a signal peptide. Residues 25–114 (GPHSLRYFET…LLRYYNQSEG (90 aa)) are alpha-1. The Extracellular portion of the chain corresponds to 25 to 306 (GPHSLRYFET…RWEPPPSTDS (282 aa)). Asn-110 carries an N-linked (GlcNAc...) asparagine glycan. Residues 115-206 (GSHTIQRLSG…ELGNATLLHT (92 aa)) form an alpha-2 region. A disulfide bridge links Cys-125 with Cys-188. Asn-200 and Asn-280 each carry an N-linked (GlcNAc...) asparagine glycan. Residues 207–298 (DSPKAHVTHH…GLPEPLTLRW (92 aa)) form an alpha-3 region. One can recognise an Ig-like C1-type domain in the interval 209-297 (PKAHVTHHPR…EGLPEPLTLR (89 aa)). Residues Cys-227 and Cys-283 are joined by a disulfide bond. The interval 299 to 306 (EPPPSTDS) is connecting peptide. A helical membrane pass occupies residues 307-333 (YMVIVAVLGVLGAVAIIGAVVAFVMMM). Residues 334–362 (RRNTGGKGGDYTLTPGSQSSEMSLPDCKA) lie on the Cytoplasmic side of the membrane. Positions 340-362 (KGGDYTLTPGSQSSEMSLPDCKA) are disordered. 2 positions are modified to phosphoserine: Ser-353 and Ser-356.

This sequence belongs to the MHC class I family. In terms of assembly, heterodimer of an alpha chain and a beta chain (beta-2-microglobulin). Post-translationally, polyubiquitinated in case of infection by murid herpesvirus 4, by the viral E3 ligase K3 (mK3), leading to target the protein for rapid degradation by the endoplasmic reticulum-associated degradation (ERAD) system. Ubiquitination takes place on lysine, as well as serine and threonine residues present in the cytoplasmic tail. Hydroxylated serine and threonine residues in the cytoplasmic tail are subject to ubiquitination via ester bonds instead of the classical isopeptide linkage. Hydroxylation of residues in the cytoplasmic tail.

Its subcellular location is the membrane. Its function is as follows. Involved in the presentation of foreign antigens to the immune system. The sequence is that of H-2 class I histocompatibility antigen, D-K alpha chain (H2-D1) from Mus musculus (Mouse).